We begin with the raw amino-acid sequence, 784 residues long: Protein-tyrosine-phosphatase MKP1 (784 aa).

2 disordered regions span residues M1–A73 and P94–R118. Over residues W22 to S34 the composition is skewed to low complexity. Phosphothreonine occurs at positions 64 and 109. The Tyrosine-protein phosphatase domain occupies E149–A291. C235 functions as the Phosphocysteine intermediate in the catalytic mechanism. Residue C235 to R241 participates in substrate binding. Residues H488 to G586 form a disordered region. 2 stretches are compositionally biased toward low complexity: residues S489–P510 and S521–L553. Positions P554–A577 are enriched in polar residues. A phosphoserine mark is found at S558 and S572.

As to quaternary structure, interacts with MPK6. May interact with MPK3 and MPK4. Phosphorylated on threonine and serine residues by MPK6.

Its subcellular location is the cytoplasm. The protein resides in the cytosol. The catalysed reaction is O-phospho-L-tyrosyl-[protein] + H2O = L-tyrosyl-[protein] + phosphate. In terms of biological role, protein-tyrosine-phosphatase that acts as a negative regulator of MPK6 and MPK3 signaling by dephosphorylating and repressing MPK6 and MPK3. Modulates defense response by repressing salicylic acid (SA) production, camalexin biosynthesis and SNC1-mediated responses. Acts as a negative regulator of MPK6-mediated pathogen-associated molecular pattern (PAMP) responses, including MPK6 and MPK3 activation, accumulation of extracellular reactive oxygen species and inhibition of seedling growth. Involved in UV-B stress tolerance. May be involved in salt and genotoxic stress responses. The protein is Protein-tyrosine-phosphatase MKP1 (MKP1) of Arabidopsis thaliana (Mouse-ear cress).